We begin with the raw amino-acid sequence, 524 residues long: Metalloendopeptidase OMA1, mitochondrial (524 aa).

Residues 1–13 (MSFICGLQSAARN) constitute a mitochondrion transit peptide. The propeptide occupies 14-143 (HVFFRFNSLS…RNFHTSPRFQ (130 aa)). Over 144–195 (AAPVPLLLMILKPVQKLFAIIVGRGIRKWWQALPPNKKEVVKENIRKNKWKL) the chain is Mitochondrial matrix. Residues 148-167 (PLLLMILKPVQKLFAIIVGR) form a cardiolipin-binding region. The interval 165 to 195 (VGRGIRKWWQALPPNKKEVVKENIRKNKWKL) is stress-sensor region. The helical transmembrane segment at 196–216 (FLGLSSFGLLFVVFYFTHLEV) threads the bilayer. His327 is a Zn(2+) binding site. Residue Glu328 is part of the active site. The Zn(2+) site is built by His331 and Glu392. A disulfide bridge links Cys407 with Cys465.

Belongs to the peptidase M48 family. Homooligomer. Requires Zn(2+) as cofactor. May form a redox-dependent disulfide bond. Exists in a semi-oxidized state and is activated by prolonged hypoxia. Post-translationally, autocatalytically cleaved in response to mitochondrial depolarization both at the N-terminus and C-terminus to generate the short active form (S-OMA1). Autocatalytic processing at the C-terminus takes place at residues 447-456. The S-OMA1 form is unstable. OMA1 pre-processing by AFG3L2 may participate in maturation before OMA1 autocatalytic cleavage. Degraded by YMEL1 in response to membrane depolarization. Protein turnover is regulated by prohibitin (PHB and PHB2), which promotes degradation of OMA1 in a cardiolipin-binding manner. Widely expressed, with strong expression in the heart, skeletal muscle, kidney and liver.

The protein resides in the mitochondrion inner membrane. Its activity is regulated as follows. Protease activity is activated upon autocatalytic cleavage in response to mitochondrial depolarization. Functionally, metalloprotease that is part of the quality control system in the inner membrane of mitochondria. Activated in response to various mitochondrial stress, leading to the proteolytic cleavage of target proteins, such as OPA1, UQCC3 and DELE1. Involved in the fusion of the mitochondrial inner membranes by mediating cleavage of OPA1 at S1 position, generating the soluble OPA1 (S-OPA1), which cooperates with the membrane form (L-OPA1) to coordinate the fusion of mitochondrial inner membranes. Following stress conditions that induce loss of mitochondrial membrane potential, mediates cleavage of OPA1, leading to excess production of soluble OPA1 (S-OPA1) and negative regulation of mitochondrial fusion. Involved in mitochondrial safeguard in response to transient mitochondrial membrane depolarization (flickering) by catalyzing cleavage of OPA1, leading to excess production of S-OPA1, preventing mitochondrial hyperfusion. Also acts as a regulator of apoptosis: upon BAK and BAX aggregation, mediates cleavage of OPA1, leading to the remodeling of mitochondrial cristae and allowing the release of cytochrome c from mitochondrial cristae. In depolarized mitochondria, may also act as a backup protease for PINK1 by mediating PINK1 cleavage and promoting its subsequent degradation by the proteasome. May also cleave UQCC3 in response to mitochondrial depolarization. Also acts as an activator of the integrated stress response (ISR): in response to mitochondrial stress, mediates cleavage of DELE1 to generate the processed form of DELE1 (S-DELE1), which translocates to the cytosol and activates EIF2AK1/HRI to trigger the ISR. Its role in mitochondrial quality control is essential for regulating lipid metabolism as well as to maintain body temperature and energy expenditure under cold-stress conditions. Binds cardiolipin, possibly regulating its protein turnover. Required for the stability of the respiratory supercomplexes. This is Metalloendopeptidase OMA1, mitochondrial from Homo sapiens (Human).